Here is a 582-residue protein sequence, read N- to C-terminus: ATP-dependent lipid A-core flippase (582 aa).

5 helical membrane-spanning segments follow: residues 16–36 (LWPH…ALVI), 69–89 (FIIL…GYCM), 153–173 (IIGL…VLVV), 250–270 (LANP…LYLA), and 275–295 (IKET…FGLL). The 282-residue stretch at 29–310 (VAVVALVINA…LTSVTSDFQR (282 aa)) folds into the ABC transmembrane type-1 domain. The ABC transporter domain occupies 342 to 578 (IKVDNVTFTY…DGAYAQLHRI (237 aa)). An ATP-binding site is contributed by 376-383 (GRSGSGKS).

Belongs to the ABC transporter superfamily. Lipid exporter (TC 3.A.1.106) family. Homodimer.

The protein resides in the cell inner membrane. The enzyme catalyses ATP + H2O + lipid A-core oligosaccharideSide 1 = ADP + phosphate + lipid A-core oligosaccharideSide 2.. Involved in lipopolysaccharide (LPS) biosynthesis. Translocates lipid A-core from the inner to the outer leaflet of the inner membrane. Transmembrane domains (TMD) form a pore in the inner membrane and the ATP-binding domain (NBD) is responsible for energy generation. This chain is ATP-dependent lipid A-core flippase, found in Aliivibrio fischeri (strain ATCC 700601 / ES114) (Vibrio fischeri).